Reading from the N-terminus, the 408-residue chain is Putative agmatinase 3 (408 aa).

An N-terminal signal peptide occupies residues 1 to 21 (MKSVEWFTWGVFLLLSGFGEA). Residues His-198, Asp-222, His-224, Asp-226, Asp-319, and Asp-321 each contribute to the Mn(2+) site.

The protein belongs to the arginase family. It depends on Mn(2+) as a cofactor.

The enzyme catalyses agmatine + H2O = urea + putrescine. This chain is Putative agmatinase 3, found in Schizosaccharomyces pombe (strain 972 / ATCC 24843) (Fission yeast).